The sequence spans 199 residues: N-(5'-phosphoribosyl)anthranilate isomerase (199 aa).

This sequence belongs to the TrpF family.

It catalyses the reaction N-(5-phospho-beta-D-ribosyl)anthranilate = 1-(2-carboxyphenylamino)-1-deoxy-D-ribulose 5-phosphate. It participates in amino-acid biosynthesis; L-tryptophan biosynthesis; L-tryptophan from chorismate: step 3/5. The protein is N-(5'-phosphoribosyl)anthranilate isomerase of Campylobacter jejuni subsp. jejuni serotype O:6 (strain 81116 / NCTC 11828).